A 215-amino-acid polypeptide reads, in one-letter code: MTQTLADMRRDYTRDGLSEAQAPLDPFTLFRQWFDDAVKTEQLPVEPNAMTLATVDEDGRPHCRVLLLKGLDERGFTFFSNYESAKGRQLAARPYAAMTFFWPSLERQVRIEGRVERVTPAESDGYFQVRPLGSRIGAWASPQSRVIRDRAELENLLAETEKRFLNQAPHCPPHWGGYRLLPERIEFWQGRPSRLHDRLDYRLQGEAWIRQRLAP.

Residues 9–12 (RRDY) and Lys69 contribute to the substrate site. FMN-binding positions include 64–69 (RVLLLK), 79–80 (FS), Lys86, and Gln108. Tyr126, Arg130, and Ser134 together coordinate substrate. FMN-binding positions include 143–144 (QS) and Trp188. 194–196 (RLH) lines the substrate pocket. Arg198 contacts FMN.

It belongs to the pyridoxamine 5'-phosphate oxidase family. In terms of assembly, homodimer. FMN is required as a cofactor.

The catalysed reaction is pyridoxamine 5'-phosphate + O2 + H2O = pyridoxal 5'-phosphate + H2O2 + NH4(+). It carries out the reaction pyridoxine 5'-phosphate + O2 = pyridoxal 5'-phosphate + H2O2. The protein operates within cofactor metabolism; pyridoxal 5'-phosphate salvage; pyridoxal 5'-phosphate from pyridoxamine 5'-phosphate: step 1/1. It functions in the pathway cofactor metabolism; pyridoxal 5'-phosphate salvage; pyridoxal 5'-phosphate from pyridoxine 5'-phosphate: step 1/1. Functionally, catalyzes the oxidation of either pyridoxine 5'-phosphate (PNP) or pyridoxamine 5'-phosphate (PMP) into pyridoxal 5'-phosphate (PLP). The chain is Pyridoxine/pyridoxamine 5'-phosphate oxidase from Ectopseudomonas mendocina (strain ymp) (Pseudomonas mendocina).